An 862-amino-acid chain; its full sequence is Leucine--tRNA ligase (862 aa).

The 'HIGH' region signature appears at 42–52; the sequence is PYPSGKIHIGH. The short motif at 614 to 618 is the 'KMSKS' region element; the sequence is KMSKS. Residue lysine 617 coordinates ATP.

It belongs to the class-I aminoacyl-tRNA synthetase family.

The protein localises to the cytoplasm. The enzyme catalyses tRNA(Leu) + L-leucine + ATP = L-leucyl-tRNA(Leu) + AMP + diphosphate. This Syntrophus aciditrophicus (strain SB) protein is Leucine--tRNA ligase.